A 51-amino-acid chain; its full sequence is UPF0181 protein HAPS_0710 (51 aa).

Belongs to the UPF0181 family.

The polypeptide is UPF0181 protein HAPS_0710 (Glaesserella parasuis serovar 5 (strain SH0165) (Haemophilus parasuis)).